Consider the following 464-residue polypeptide: ATP synthase subunit beta (464 aa).

Position 152 to 159 (152 to 159 (GGAGVGKT)) interacts with ATP.

Belongs to the ATPase alpha/beta chains family. F-type ATPases have 2 components, CF(1) - the catalytic core - and CF(0) - the membrane proton channel. CF(1) has five subunits: alpha(3), beta(3), gamma(1), delta(1), epsilon(1). CF(0) has three main subunits: a(1), b(2) and c(9-12). The alpha and beta chains form an alternating ring which encloses part of the gamma chain. CF(1) is attached to CF(0) by a central stalk formed by the gamma and epsilon chains, while a peripheral stalk is formed by the delta and b chains.

The protein resides in the cell membrane. It catalyses the reaction ATP + H2O + 4 H(+)(in) = ADP + phosphate + 5 H(+)(out). Produces ATP from ADP in the presence of a proton gradient across the membrane. The catalytic sites are hosted primarily by the beta subunits. This Ureaplasma urealyticum serovar 10 (strain ATCC 33699 / Western) protein is ATP synthase subunit beta.